Reading from the N-terminus, the 160-residue chain is Lipoprotein signal peptidase (160 aa).

3 consecutive transmembrane segments (helical) span residues 13 to 33 (IYIT…RLII), 72 to 92 (WFLS…ITKL), and 104 to 124 (SLII…GFVV). Residues D125 and D143 contribute to the active site. The chain crosses the membrane as a helical span at residues 134–154 (WHFATFNIADCSIFIGIIILM).

This sequence belongs to the peptidase A8 family.

It is found in the cell inner membrane. The enzyme catalyses Release of signal peptides from bacterial membrane prolipoproteins. Hydrolyzes -Xaa-Yaa-Zaa-|-(S,diacylglyceryl)Cys-, in which Xaa is hydrophobic (preferably Leu), and Yaa (Ala or Ser) and Zaa (Gly or Ala) have small, neutral side chains.. It functions in the pathway protein modification; lipoprotein biosynthesis (signal peptide cleavage). In terms of biological role, this protein specifically catalyzes the removal of signal peptides from prolipoproteins. This Buchnera aphidicola subsp. Acyrthosiphon pisum (strain APS) (Acyrthosiphon pisum symbiotic bacterium) protein is Lipoprotein signal peptidase.